The primary structure comprises 444 residues: Probable ribonuclease FAU-1 (444 aa).

The protein belongs to the FAU-1 family.

Functionally, probable RNase involved in rRNA stability through maturation and/or degradation of precursor rRNAs. Binds to RNA in loop regions with AU-rich sequences. The chain is Probable ribonuclease FAU-1 from Pyrobaculum arsenaticum (strain DSM 13514 / JCM 11321 / PZ6).